A 408-amino-acid chain; its full sequence is Na(+)-translocating NADH-quinone reductase subunit F (408 aa).

The chain crosses the membrane as a helical span at residues 4–24; sequence IYLGVGMFIAIVLALVLIIMF. The 2Fe-2S ferredoxin-type domain maps to 33–127; sequence GEVTISINGD…DMDIELPEEI (95 aa). The [2Fe-2S] cluster site is built by Cys70, Cys76, Cys79, and Cys111. The region spanning 130–270 is the FAD-binding FR-type domain; it reads IKKWDCEVIS…SGPFGEFFAK (141 aa).

Belongs to the NqrF family. Composed of six subunits; NqrA, NqrB, NqrC, NqrD, NqrE and NqrF. [2Fe-2S] cluster is required as a cofactor. Requires FAD as cofactor.

It is found in the cell inner membrane. It carries out the reaction a ubiquinone + n Na(+)(in) + NADH + H(+) = a ubiquinol + n Na(+)(out) + NAD(+). Its function is as follows. NQR complex catalyzes the reduction of ubiquinone-1 to ubiquinol by two successive reactions, coupled with the transport of Na(+) ions from the cytoplasm to the periplasm. The first step is catalyzed by NqrF, which accepts electrons from NADH and reduces ubiquinone-1 to ubisemiquinone by a one-electron transfer pathway. The chain is Na(+)-translocating NADH-quinone reductase subunit F from Pseudoalteromonas atlantica (strain T6c / ATCC BAA-1087).